We begin with the raw amino-acid sequence, 184 residues long: MFDIGFSELVLLFVVGLIVLGPQRLPVAVRTVMGWVRTVRSLATNVQNELSQELKLKELQESIKKAEDLNISQLSPELSETVEELRQSAQKIKMNLEEKAAETNSSVEEQVQELKSAVQNSQGTATTEIEKNFDFPSGELSPAELAELAEEGEPMLEMGESDFSEDEQATASSNETIENIKEKV.

Residues M1 to G21 form a helical membrane-spanning segment. A compositionally biased stretch (acidic residues) spans A149–Q168. The tract at residues A149–V184 is disordered.

This sequence belongs to the TatB family. As to quaternary structure, the Tat system comprises two distinct complexes: a TatABC complex, containing multiple copies of TatA, TatB and TatC subunits, and a separate TatA complex, containing only TatA subunits. Substrates initially bind to the TatABC complex, which probably triggers association of the separate TatA complex to form the active translocon.

Its subcellular location is the cell inner membrane. Part of the twin-arginine translocation (Tat) system that transports large folded proteins containing a characteristic twin-arginine motif in their signal peptide across membranes. Together with TatC, TatB is part of a receptor directly interacting with Tat signal peptides. TatB may form an oligomeric binding site that transiently accommodates folded Tat precursor proteins before their translocation. The chain is Sec-independent protein translocase protein TatB from Histophilus somni (strain 129Pt) (Haemophilus somnus).